The following is a 173-amino-acid chain: Inorganic pyrophosphatase (173 aa).

3 residues coordinate substrate: lysine 26, arginine 40, and tyrosine 52. 3 residues coordinate Mg(2+): aspartate 62, aspartate 67, and aspartate 99. Tyrosine 138 provides a ligand contact to substrate.

Belongs to the PPase family. In terms of assembly, homohexamer. Mg(2+) is required as a cofactor.

The protein localises to the cytoplasm. It catalyses the reaction diphosphate + H2O = 2 phosphate + H(+). Functionally, catalyzes the hydrolysis of inorganic pyrophosphate (PPi) forming two phosphate ions. The chain is Inorganic pyrophosphatase from Sulfolobus acidocaldarius (strain ATCC 33909 / DSM 639 / JCM 8929 / NBRC 15157 / NCIMB 11770).